A 277-amino-acid polypeptide reads, in one-letter code: Phosphatidylglycerol--prolipoprotein diacylglyceryl transferase (277 aa).

4 helical membrane passes run 15-35, 50-70, 89-109, and 112-132; these read IHVR…TFMS, IDLL…YYVI, GGIA…VFCY, and FLPP…AQVL. R134 serves as a coordination point for a 1,2-diacyl-sn-glycero-3-phospho-(1'-sn-glycerol). The next 3 membrane-spanning stretches (helical) occupy residues 174-194, 204-224, and 234-254; these read KPTF…ILSL, GEVF…VEGM, and VIRV…ILFV.

This sequence belongs to the Lgt family.

It is found in the cell membrane. The enzyme catalyses L-cysteinyl-[prolipoprotein] + a 1,2-diacyl-sn-glycero-3-phospho-(1'-sn-glycerol) = an S-1,2-diacyl-sn-glyceryl-L-cysteinyl-[prolipoprotein] + sn-glycerol 1-phosphate + H(+). It participates in protein modification; lipoprotein biosynthesis (diacylglyceryl transfer). In terms of biological role, catalyzes the transfer of the diacylglyceryl group from phosphatidylglycerol to the sulfhydryl group of the N-terminal cysteine of a prolipoprotein, the first step in the formation of mature lipoproteins. The chain is Phosphatidylglycerol--prolipoprotein diacylglyceryl transferase from Lactobacillus delbrueckii subsp. bulgaricus (strain ATCC 11842 / DSM 20081 / BCRC 10696 / JCM 1002 / NBRC 13953 / NCIMB 11778 / NCTC 12712 / WDCM 00102 / Lb 14).